The primary structure comprises 159 residues: Ribosomal RNA large subunit methyltransferase H (159 aa).

Leu-76 and Gly-108 together coordinate S-adenosyl-L-methionine.

This sequence belongs to the RNA methyltransferase RlmH family. Homodimer.

It is found in the cytoplasm. The catalysed reaction is pseudouridine(1915) in 23S rRNA + S-adenosyl-L-methionine = N(3)-methylpseudouridine(1915) in 23S rRNA + S-adenosyl-L-homocysteine + H(+). Its function is as follows. Specifically methylates the pseudouridine at position 1915 (m3Psi1915) in 23S rRNA. In Natranaerobius thermophilus (strain ATCC BAA-1301 / DSM 18059 / JW/NM-WN-LF), this protein is Ribosomal RNA large subunit methyltransferase H.